We begin with the raw amino-acid sequence, 130 residues long: Holo-[acyl-carrier-protein] synthase (130 aa).

Mg(2+) is bound by residues Asp-9 and Glu-58.

This sequence belongs to the P-Pant transferase superfamily. AcpS family. It depends on Mg(2+) as a cofactor.

It localises to the cytoplasm. The enzyme catalyses apo-[ACP] + CoA = holo-[ACP] + adenosine 3',5'-bisphosphate + H(+). Its function is as follows. Transfers the 4'-phosphopantetheine moiety from coenzyme A to a Ser of acyl-carrier-protein. The sequence is that of Holo-[acyl-carrier-protein] synthase from Mycolicibacterium paratuberculosis (strain ATCC BAA-968 / K-10) (Mycobacterium paratuberculosis).